We begin with the raw amino-acid sequence, 47 residues long: Defensin-like protein 1 (47 aa).

4 cysteine pairs are disulfide-bonded: cysteine 5–cysteine 47, cysteine 16–cysteine 36, cysteine 22–cysteine 43, and cysteine 26–cysteine 45.

It belongs to the DEFL family.

In terms of biological role, fabatins have antibacterial activity against Gram-positive and Gram-negative bacteria. High activity against P.aeruginosa. No activity against S.cerevisiae and C.albicans. This Vicia faba (Broad bean) protein is Defensin-like protein 1.